The chain runs to 503 residues: Variant surface glycoprotein ILTAT 1.3 (503 aa).

Positions 1–29 (MTKAYENRMLLQALVLAAVLCTTHAEGTA) are cleaved as a signal peptide. 2 disulfides stabilise this stretch: cysteine 42–cysteine 168 and cysteine 150–cysteine 206. Asparagine 419 and asparagine 432 each carry an N-linked (GlcNAc...) asparagine glycan. Residue aspartate 480 is the site of GPI-anchor amidated aspartate attachment. Positions 481–503 (SSFILNKQFALSVVSAAFAALLF) are cleaved as a propeptide — removed in mature form.

It is found in the cell membrane. VSG forms a coat on the surface of the parasite. The trypanosome evades the immune response of the host by expressing a series of antigenically distinct VSGs from an estimated 1000 VSG genes. The sequence is that of Variant surface glycoprotein ILTAT 1.3 from Trypanosoma brucei brucei.